The primary structure comprises 121 residues: Class I hydrophobin 2 (121 aa).

The N-terminal stretch at 1–18 (MQFTTIVMTLAAAVAVTA) is a signal peptide. Intrachain disulfides connect C52/C101, C60/C94, C61/C79, and C102/C116. N-linked (GlcNAc...) asparagine glycosylation occurs at N83.

This sequence belongs to the fungal hydrophobin family. Self-assembles to form functional amyloid fibrils called rodlets. Self-assembly into fibrillar rodlets occurs spontaneously at hydrophobic:hydrophilic interfaces and the rodlets further associate laterally to form amphipathic monolayers. In terms of tissue distribution, expressed in conidia and aerial hyphae.

The protein localises to the secreted. It localises to the cell wall. Functionally, aerial growth, conidiation, and dispersal of filamentous fungi in the environment rely upon a capability of their secreting small amphipathic proteins called hydrophobins (HPBs) with low sequence identity. Class I can self-assemble into an outermost layer of rodlet bundles on aerial cell surfaces, conferring cellular hydrophobicity that supports fungal growth, development and dispersal; whereas Class II form highly ordered films at water-air interfaces through intermolecular interactions but contribute nothing to the rodlet structure. Hcf-2 is a class I hydrophobin that is not necessary for the development of hyphae or conidia but contributes to cell surface hydrophobicity. The chain is Class I hydrophobin 2 from Passalora fulva (Tomato leaf mold).